The primary structure comprises 516 residues: 2,3-bisphosphoglycerate-independent phosphoglycerate mutase (516 aa).

Mn(2+) contacts are provided by Asp-14 and Ser-64. The active-site Phosphoserine intermediate is the Ser-64. Residues His-125, 155-156 (RD), Arg-187, Arg-193, 263-266 (RPDR), and Lys-337 each bind substrate. Residues Asp-404, His-408, Asp-445, His-446, and His-464 each coordinate Mn(2+).

This sequence belongs to the BPG-independent phosphoglycerate mutase family. Monomer. The cofactor is Mn(2+).

It catalyses the reaction (2R)-2-phosphoglycerate = (2R)-3-phosphoglycerate. It participates in carbohydrate degradation; glycolysis; pyruvate from D-glyceraldehyde 3-phosphate: step 3/5. Catalyzes the interconversion of 2-phosphoglycerate and 3-phosphoglycerate. The polypeptide is 2,3-bisphosphoglycerate-independent phosphoglycerate mutase (Saccharophagus degradans (strain 2-40 / ATCC 43961 / DSM 17024)).